Consider the following 235-residue polypeptide: LexA repressor (235 aa).

Positions 47–67 form a DNA-binding region, H-T-H motif; that stretch reads IREIADAVGLTSTSSVAHQLR. Catalysis depends on for autocatalytic cleavage activity residues Ser159 and Lys196.

This sequence belongs to the peptidase S24 family. As to quaternary structure, homodimer.

The enzyme catalyses Hydrolysis of Ala-|-Gly bond in repressor LexA.. In terms of biological role, represses a number of genes involved in the response to DNA damage (SOS response), including recA and lexA. In the presence of single-stranded DNA, RecA interacts with LexA causing an autocatalytic cleavage which disrupts the DNA-binding part of LexA, leading to derepression of the SOS regulon and eventually DNA repair. In Mycobacterium leprae (strain Br4923), this protein is LexA repressor.